Here is a 117-residue protein sequence, read N- to C-terminus: cAMP-regulated phosphoprotein 19-B (117 aa).

Over residues 1–37 (MSRDNQEIKAPEESSAEEQKEMDDKVTSPEKAEEIKL) the composition is skewed to basic and acidic residues. A disordered region spans residues 1–54 (MSRDNQEIKAPEESSAEEQKEMDDKVTSPEKAEEIKLKSRYPNIGPKPGGSDFL). At Ser-28 the chain carries Phosphoserine; by CDK2. Phosphoserine; by GWL is present on Ser-67. A disordered region spans residues 77 to 117 (MKNKQLPTAAPDKTEVTGDHIPTPQDLPQRKPSLVASKLAG). Position 99 is a phosphothreonine; by CDK2 (Thr-99). Phosphoserine; by PKA is present on Ser-109.

The protein belongs to the endosulfine family. In terms of assembly, interacts (when phosphorylated at Ser-67) with ppp2r2d. Phosphorylation at Ser-67 by gwl during mitosis is essential for interaction with ppp2r2d (PR55-delta) and subsequent inactivation of PP2A.

Its subcellular location is the cytoplasm. In terms of biological role, protein phosphatase inhibitor that specifically inhibits protein phosphatase 2A (PP2A) during mitosis. When phosphorylated at Ser-67 during mitosis, specifically interacts with ppp2r2d (PR55-delta) and inhibits its activity, leading to inactivation of PP2A, an essential condition to keep cyclin-B1-CDK1 activity high during M phase. This chain is cAMP-regulated phosphoprotein 19-B (arpp19-b), found in Xenopus laevis (African clawed frog).